Here is a 343-residue protein sequence, read N- to C-terminus: Aspartate carbamoyltransferase catalytic subunit (343 aa).

Positions 91 and 92 each coordinate carbamoyl phosphate. Lys119 lines the L-aspartate pocket. The carbamoyl phosphate site is built by Arg141, His171, and Gln174. L-aspartate-binding residues include Arg204 and Arg259. The carbamoyl phosphate site is built by Gly300 and Pro301.

This sequence belongs to the aspartate/ornithine carbamoyltransferase superfamily. ATCase family. Heterododecamer (2C3:3R2) of six catalytic PyrB chains organized as two trimers (C3), and six regulatory PyrI chains organized as three dimers (R2).

It carries out the reaction carbamoyl phosphate + L-aspartate = N-carbamoyl-L-aspartate + phosphate + H(+). It functions in the pathway pyrimidine metabolism; UMP biosynthesis via de novo pathway; (S)-dihydroorotate from bicarbonate: step 2/3. Functionally, catalyzes the condensation of carbamoyl phosphate and aspartate to form carbamoyl aspartate and inorganic phosphate, the committed step in the de novo pyrimidine nucleotide biosynthesis pathway. This is Aspartate carbamoyltransferase catalytic subunit from Burkholderia orbicola (strain MC0-3).